Consider the following 319-residue polypeptide: MPYARILGTGSYLPDTILTNTELAKRVETTDEWIVSRTGIQERRLAAEGQLTSDLAYRAALRAIEAAGIEAASIEMIIVATTTPDMVFPSTAVVVQERLGLAGVPAFDVQAVCAGFMYAFATANAFIRSGQIKRALVIGAETLSRLIDWDDRRTCILFGDGAGAVVLGADEDTGILSTELRADGRYKDILKCDARPSQGVLAGNPFVYMDGQAVFKFAVKALADIAEVTLAKAGKTKADLDWLVPHQANLRIIEATARHLALPMDKVVVTLPNHANTSAASVPLALDAAVRDGRIRRGELLLLEGIGGGFAWGSALLHY.

Residues cysteine 113 and histidine 246 contribute to the active site. The interval 247-251 is ACP-binding; it reads QANLR. Asparagine 276 is an active-site residue.

Belongs to the thiolase-like superfamily. FabH family. In terms of assembly, homodimer.

It is found in the cytoplasm. The catalysed reaction is malonyl-[ACP] + acetyl-CoA + H(+) = 3-oxobutanoyl-[ACP] + CO2 + CoA. It functions in the pathway lipid metabolism; fatty acid biosynthesis. Functionally, catalyzes the condensation reaction of fatty acid synthesis by the addition to an acyl acceptor of two carbons from malonyl-ACP. Catalyzes the first condensation reaction which initiates fatty acid synthesis and may therefore play a role in governing the total rate of fatty acid production. Possesses both acetoacetyl-ACP synthase and acetyl transacylase activities. Its substrate specificity determines the biosynthesis of branched-chain and/or straight-chain of fatty acids. The sequence is that of Beta-ketoacyl-[acyl-carrier-protein] synthase III from Laribacter hongkongensis (strain HLHK9).